The primary structure comprises 369 residues: MIALLILSLTCSVSTYRLQGFTNAGIVAYKNIQDDNIVFSPFGYSFSMFMSLLPASGNTRIELLKTMDLRKRDLGPAFTELISGLAKLKTSKYTYTDLTYQSFVDNTVCIKPLYYQQYHRFGLYRLNFRRDAVNKINSIVERRSGMSNVVDSNMLDNNTLWAIINTIYFKGTWQYPFDITKTRNASFTNKYGTKTVPMMNVVTKLQGNTITIDDEEYDMVRLPYKDANISMYLAIGDNMTHFTDSITAAKLDYWSFQLGNKVYNLKLPKFSIENKRDIKSIAEMMAPSMFNPDNASFKHMTRDPLYIYKMFQNAKIDVDEQGTVAEASTIMVATARSSPEKLEFNTPFVFIIRHDITGFILFMGKVESP.

The N-terminal stretch at 1 to 15 (MIALLILSLTCSVST) is a signal peptide.

It belongs to the serpin family. Orthopoxvirus OPG040 subfamily. Interacts with A56 protein.

The protein localises to the virion membrane. It localises to the host cell membrane. Its function is as follows. Prevents cell to cell fusion via its interaction with A56 protein. The A56-K2 complex associates with components of the entry fusion complex (EFC) presumably to avoid superinfection and syncytium formation. The polypeptide is Superinfection exclusion protein (OPG040) (Vaccinia virus (strain Copenhagen) (VACV)).